We begin with the raw amino-acid sequence, 951 residues long: Cadmium/zinc-transporting ATPase HMA2 (951 aa).

Residues 1-83 (MASKKMTKSY…VRVTGETNFK (83 aa)) are Cytoplasmic-facing. An HMA domain is found at 7 to 73 (TKSYFDVLGI…ALNQAQLEAN (67 aa)). Residues 84-105 (NKWPSPFAVVSGILLLLSFFKY) form a helical membrane-spanning segment. Topologically, residues 106–108 (LYS) are extracellular. A helical transmembrane segment spans residues 109 to 128 (PFRWLAVAAVVAGIYPILAK). Topologically, residues 129-135 (AVASLAR) are cytoplasmic. The chain crosses the membrane as a helical span at residues 136–156 (FRIDINILVVVTVGATIGMQD). Tyr-157 is a topological domain (extracellular). The helical transmembrane segment at 158-178 (TEAAVVVFLFTIAEWLQSRAS) threads the bilayer. The Cytoplasmic segment spans residues 179–304 (YKASAVMQSL…KTETQRFIDK (126 aa)). Residues 305-327 (CSKYYTPAIILISICFVAIPFAL) traverse the membrane as a helical segment. The Extracellular portion of the chain corresponds to 328 to 335 (KVHNLKHW). The helical transmembrane segment at 336 to 353 (VHLALVVLVSACPCGLIL) threads the bilayer. At 354-647 (STPVATFCAL…KLAKRAKRKV (294 aa)) the chain is on the cytoplasmic side. Residue Asp-391 is the 4-aspartylphosphate intermediate of the active site. The Mg(2+) site is built by Asp-592 and Asp-596. A helical transmembrane segment spans residues 648–667 (VENVVISITMKGAILALAFA). Topologically, residues 668-671 (GHPL) are extracellular. Residues 672-691 (IWAAVLADVGTCLLVILNSM) form a helical membrane-spanning segment. Topologically, residues 692 to 951 (LLLSDKHKTG…VGTLKEIVIE (260 aa)) are cytoplasmic. Basic and acidic residues predominate over residues 841–851 (ELQQSCHDKPS). Residues 841-866 (ELQQSCHDKPSGLDIGTGPKHEGSST) are disordered.

The protein belongs to the cation transport ATPase (P-type) (TC 3.A.3) family. Type IB subfamily. As to expression, predominantly expressed in the vascular tissues of roots, stems, and leaves. Also detected in developing anthers.

It is found in the cell membrane. The enzyme catalyses Zn(2+)(in) + ATP + H2O = Zn(2+)(out) + ADP + phosphate + H(+). It carries out the reaction Cd(2+)(in) + ATP + H2O = Cd(2+)(out) + ADP + phosphate + H(+). Functionally, plays an important role in zinc transport and homeostasis. Could also be involved in cadmium detoxification. The chain is Cadmium/zinc-transporting ATPase HMA2 (HMA2) from Arabidopsis thaliana (Mouse-ear cress).